The sequence spans 247 residues: PF03932 family protein CutC (247 aa).

Belongs to the CutC family.

The protein localises to the cytoplasm. The protein is PF03932 family protein CutC of Klebsiella pneumoniae subsp. pneumoniae (strain ATCC 700721 / MGH 78578).